The sequence spans 180 residues: Large ribosomal subunit protein uL6 (180 aa).

It belongs to the universal ribosomal protein uL6 family. In terms of assembly, part of the 50S ribosomal subunit.

Its function is as follows. This protein binds to the 23S rRNA, and is important in its secondary structure. It is located near the subunit interface in the base of the L7/L12 stalk, and near the tRNA binding site of the peptidyltransferase center. The polypeptide is Large ribosomal subunit protein uL6 (Picosynechococcus sp. (strain ATCC 27264 / PCC 7002 / PR-6) (Agmenellum quadruplicatum)).